A 386-amino-acid polypeptide reads, in one-letter code: MLMYKLMSEFHLEWGITLLTLNFSYFLFNSYQIKANWPLSYSTILVSLFVLLWLTFTTQSFILFYVFFECSLIPTIILILGWGYQPERLPASYYFLFYTLLSSLPLLFIIIAHTSIYSSSFLQFWGNFMDKMIFLLAILSFLVKLPVYFAHIWLPKAHVEAPVTGSMVLAAILLKLGGYGLYLVQVLNIYSETTLMGVCLMGGIFSCLICLRQSDVKSLIAYSSVAHMSFVILGMLMSCTYTNMSSILMMVSHGICSSGLFYLSYLFYARIWSRSFLLTRSMISLFPYLCFWWLSLSFLNMGLPPSLNFFSEMYFFIGAFSLDWMVVGLSGILCFLSSCYCIYLYSSTSHGESLYIFKLISMQLKGMYNRKSSSDSVTDFNFRLLL.

11 helical membrane-spanning segments follow: residues 8–28, 37–57, 61–81, 91–111, 133–153, 167–187, 189–209, 219–239, 247–267, 283–303, and 315–335; these read SEFHLEWGITLLTLNFSYFLF, WPLSYSTILVSLFVLLWLTFT, FILFYVFFECSLIPTIILILG, ASYYFLFYTLLSSLPLLFIII, IFLLAILSFLVKLPVYFAHIW, MVLAAILLKLGGYGLYLVQVL, IYSETTLMGVCLMGGIFSCLI, LIAYSSVAHMSFVILGMLMSC, ILMMVSHGICSSGLFYLSYLF, ISLFPYLCFWWLSLSFLNMGL, and FFIGAFSLDWMVVGLSGILCF.

It belongs to the complex I subunit 4 family.

The protein resides in the mitochondrion membrane. The enzyme catalyses a ubiquinone + NADH + 5 H(+)(in) = a ubiquinol + NAD(+) + 4 H(+)(out). In terms of biological role, core subunit of the mitochondrial membrane respiratory chain NADH dehydrogenase (Complex I) that is believed to belong to the minimal assembly required for catalysis. Complex I functions in the transfer of electrons from NADH to the respiratory chain. The immediate electron acceptor for the enzyme is believed to be ubiquinone. The sequence is that of NADH-ubiquinone oxidoreductase chain 4 (ND4) from Artemia franciscana (Brine shrimp).